We begin with the raw amino-acid sequence, 333 residues long: Nucleoid-associated protein APJL_0454 (333 aa).

It belongs to the YejK family.

The protein localises to the cytoplasm. It localises to the nucleoid. The polypeptide is Nucleoid-associated protein APJL_0454 (Actinobacillus pleuropneumoniae serotype 3 (strain JL03)).